Consider the following 118-residue polypeptide: Large ribosomal subunit protein uL18 (118 aa).

The tract at residues 1-25 (MITKPDKNKVRQKRHRRVRGKLSGT) is disordered. The segment covering 10–20 (VRQKRHRRVRG) has biased composition (basic residues).

This sequence belongs to the universal ribosomal protein uL18 family. As to quaternary structure, part of the 50S ribosomal subunit; part of the 5S rRNA/L5/L18/L25 subcomplex. Contacts the 5S and 23S rRNAs.

Its function is as follows. This is one of the proteins that bind and probably mediate the attachment of the 5S RNA into the large ribosomal subunit, where it forms part of the central protuberance. The chain is Large ribosomal subunit protein uL18 from Streptococcus gordonii (strain Challis / ATCC 35105 / BCRC 15272 / CH1 / DL1 / V288).